A 1012-amino-acid chain; its full sequence is Putative cellulose synthase-like protein D5 (1012 aa).

Residues 1–85 (MSGDYANYTV…APSSNKSLLV (85 aa)) form a disordered region. Over residues 20–37 (PSGGAPPAAPSAGGARPG) the composition is skewed to low complexity. Over residues 57-69 (GGGDDGAKMDRRL) the composition is skewed to basic and acidic residues. 2 consecutive transmembrane segments (helical) span residues 150–170 (ILSP…LFLV) and 180–200 (ALWL…SWLL). D280 is a catalytic residue. The disordered stretch occupies residues 597–620 (PRQGSEAMPGAGGGRSGGGSVGGD). Residues 606–618 (GAGGGRSGGGSVG) show a composition bias toward gly residues. D717 is an active-site residue. A run of 6 helical transmembrane segments spans residues 799–819 (LFLI…QFIV), 825–845 (TFLS…LLEV), 871–891 (LAAV…SFTL), 914–934 (SLFI…VVGV), 948–968 (LLGG…FAKG), and 978–998 (TIVY…WITI).

It belongs to the glycosyltransferase 2 family. Plant cellulose synthase-like D subfamily.

It localises to the golgi apparatus membrane. Thought to be a Golgi-localized beta-glycan synthase that polymerize the backbones of noncellulosic polysaccharides (hemicelluloses) of plant cell wall. The sequence is that of Putative cellulose synthase-like protein D5 (CSLD5) from Oryza sativa subsp. indica (Rice).